We begin with the raw amino-acid sequence, 282 residues long: Pantothenate synthetase (282 aa).

30–37 lines the ATP pocket; that stretch reads MGYLHEGH. The active-site Proton donor is the H37. Q61 serves as a coordination point for (R)-pantoate. A beta-alanine-binding site is contributed by Q61. 147-150 is a binding site for ATP; that stretch reads GMKD. Q153 serves as a coordination point for (R)-pantoate. Residues V176 and 184 to 187 each bind ATP; that span reads KSSR.

Belongs to the pantothenate synthetase family. In terms of assembly, homodimer.

The protein localises to the cytoplasm. The catalysed reaction is (R)-pantoate + beta-alanine + ATP = (R)-pantothenate + AMP + diphosphate + H(+). Its pathway is cofactor biosynthesis; (R)-pantothenate biosynthesis; (R)-pantothenate from (R)-pantoate and beta-alanine: step 1/1. Catalyzes the condensation of pantoate with beta-alanine in an ATP-dependent reaction via a pantoyl-adenylate intermediate. The sequence is that of Pantothenate synthetase from Geobacillus sp. (strain WCH70).